Consider the following 713-residue polypeptide: Probable tRNA (uracil-O(2)-)-methyltransferase (713 aa).

Disordered stretches follow at residues 49–92 and 480–508; these read TLRS…REGT and LHSRQGHPQSRPGGAHAPSAPQTAAHDAG. At S76 the chain carries Phosphoserine. The segment covering 79–89 has biased composition (basic and acidic residues); it reads GEPESGPRASR. S489 bears the Phosphoserine mark. Residues 669–698 form a C3H1-type zinc finger; that stretch reads FKTRICWFFAHHPDGCVLPAAQCPFAHGPE.

The protein belongs to the TRM44 family.

It localises to the cytoplasm. The catalysed reaction is uridine(44) in tRNA(Ser) + S-adenosyl-L-methionine = 2'-O-methyluridine(44) in tRNA(Ser) + S-adenosyl-L-homocysteine + H(+). Functionally, probable adenosyl-L-methionine (AdoMet)-dependent tRNA (uracil-O(2)-)-methyltransferase. The polypeptide is Probable tRNA (uracil-O(2)-)-methyltransferase (Trmt44) (Mus musculus (Mouse)).